The primary structure comprises 133 residues: MARVTVEDCIDKVDNRFELVLLAGHRARQISQGAQITVPRDNDKNPVIALREIADETLSPDDLKEDLIHSLQKHVEVDEPEADGEVIADQTGAAVAATETDDAEDNITFDRMTEEDLLAGIEGLVPPEKSDDY.

It belongs to the RNA polymerase subunit omega family. As to quaternary structure, the RNAP catalytic core consists of 2 alpha, 1 beta, 1 beta' and 1 omega subunit. When a sigma factor is associated with the core the holoenzyme is formed, which can initiate transcription.

It carries out the reaction RNA(n) + a ribonucleoside 5'-triphosphate = RNA(n+1) + diphosphate. In terms of biological role, promotes RNA polymerase assembly. Latches the N- and C-terminal regions of the beta' subunit thereby facilitating its interaction with the beta and alpha subunits. This chain is DNA-directed RNA polymerase subunit omega, found in Mesorhizobium japonicum (strain LMG 29417 / CECT 9101 / MAFF 303099) (Mesorhizobium loti (strain MAFF 303099)).